Consider the following 100-residue polypeptide: Small ribosomal subunit protein uS14c (100 aa).

It belongs to the universal ribosomal protein uS14 family. Part of the 30S ribosomal subunit.

It is found in the plastid. It localises to the chloroplast. Its function is as follows. Binds 16S rRNA, required for the assembly of 30S particles. The chain is Small ribosomal subunit protein uS14c from Ceratophyllum demersum (Rigid hornwort).